The primary structure comprises 254 residues: U3 small nucleolar RNA-associated protein NOL7 (254 aa).

The disordered stretch occupies residues 1–90 (MVQLRPRLSR…ASARRDKTLL (90 aa)). Acidic residues-rich tracts occupy residues 18–31 (MVDE…EEEA) and 48–61 (PLDE…EAPE). Residues 71–90 (EAREEELRVRASARRDKTLL) are compositionally biased toward basic and acidic residues. Lys-127 participates in a covalent cross-link: Glycyl lysine isopeptide (Lys-Gly) (interchain with G-Cter in SUMO2). Ser-129 carries the phosphoserine modification. Lys-157 is covalently cross-linked (Glycyl lysine isopeptide (Lys-Gly) (interchain with G-Cter in SUMO2)). The disordered stretch occupies residues 235–254 (NAKRFKKRWMAKKMKKKTYK).

Belongs to the UTP16 family. Part of the small subunit (SSU) processome, composed of more than 70 proteins and the RNA chaperone small nucleolar RNA (snoRNA) U3.

Its subcellular location is the nucleus. It localises to the nucleolus. Functions as part of the small subunit (SSU) processome, first precursor of the small eukaryotic ribosomal subunit that coordinates the first two steps of ribosome biogenesis in transcription of the primary transcript pre-RNA and pre-18S processing. During the assembly of the SSU processome in the nucleolus, many ribosome biogenesis factors, an RNA chaperone and ribosomal proteins associate with the nascent pre-rRNA and work in concert to generate RNA folding, modifications, rearrangements and cleavage as well as targeted degradation of pre-ribosomal RNA by the RNA exosome. This subunit is required for processing of the 5'-external transcribed spacer sequence (5'ETS) of the primary transcript pre-rRNA to yield the 18S rRNA. Also plays a role in maintaining early pre-rRNA levels, either by assisting in its transcription or stability. The sequence is that of U3 small nucleolar RNA-associated protein NOL7 (Nol7) from Mus musculus (Mouse).